Consider the following 556-residue polypeptide: Methyltransferase/ribosomally synthesized type II borosin cyclic peptide precursor pgiMA1 (556 aa).

The methyltransferase domain stretch occupies residues 1–250 (MSSASSDSNT…SCSTLYVPPL (250 aa)). Catalysis depends on residues Arg74, Tyr78, and Tyr100. Positions 100, 102, 105, 174, 212, 243, and 244 each coordinate S-adenosyl-L-methionine. Residues 251-377 (THANKFSGNM…GAVFGVMKLR (127 aa)) are clasp domain. The precursor leader stretch occupies residues 378–386 (ASEVANEQG). Asp421, Asp434, Asp447, Asp460, Asp473, Asp486, Asp499, Asp512, Asp525, and Asp538 each carry N-methylaspartate. A propeptide spanning residues 543-556 (AVPVPDHVAGIPCM) is cleaved from the precursor.

In the N-terminal section; belongs to the precorrin methyltransferase family. As to quaternary structure, homodimer. Post-translationally, pgiMA1 automethylates at Asp-421, Asp-434, Asp-447, Asp-460, Asp-473, Asp-486, Asp-499, Asp-512, Asp-525 and Asp-538 before being processed, probably by the M64 family peptidase found in the genes surrounding PgiMA1, to release methylated peptides which then undergos macrocyclization with the N-terminus of the modified core peptides. Peptide backbone alpha-N-methylations change the physicochemical properties of amide bonds to provide structural constraints and other favorable characteristics including biological membrane permeability to peptides.

Its pathway is secondary metabolite biosynthesis. Fusion protein of the methyltransferase pgiM1 and 12 type II borosin core peptides; part of the gene cluster that mediates the biosynthesis of a type II borosin, a highly methylated cyclic peptide with potent biological activities. Type II borosins derive from the C-terminus of the fusion protein, and it is the same protein that methylates its own C-terminus using S-adenosyl methionine (SAM). The C-terminus is subsequently cleaved off and macrocyclized by a prolyloligopeptidase to give the final product. This Phlebiopsis gigantea (strain 11061_1 CR5-6) (White-rot fungus) protein is Methyltransferase/ribosomally synthesized type II borosin cyclic peptide precursor pgiMA1.